We begin with the raw amino-acid sequence, 288 residues long: MSRTFLKMNGLGNDFVVIQTLTEAFDPTPEQIRAIAKRPGVDGKGGIGCDQVIAIDPPRAEGASAYVRFWNSDGEVAGACGNGTRCVAWLLMQSAGKDAVAFDTVAGRLSGVAAGDKLVTVDMGPPGLDWTQIPLAEEMNTERVELQVGPIDAPLVHTPVCVSMGNPHVVFFVDAPVTDDFARGTGSLVEHHPLFPEGVNVGFAHIASRDHIRLKVWERGAGLTQACGTGACAAQVAAVRRGLTDRKARVEFDTGSLTIEWRESDGHVIMTGPITMEYAGKLPELVAA.

Substrate is bound by residues N13, Q51, and N71. The active-site Proton donor is C80. Residues G81–N82, N166, N200, and E218–R219 contribute to the substrate site. C227 functions as the Proton acceptor in the catalytic mechanism. G228–T229 lines the substrate pocket.

Belongs to the diaminopimelate epimerase family. As to quaternary structure, homodimer.

It is found in the cytoplasm. It carries out the reaction (2S,6S)-2,6-diaminopimelate = meso-2,6-diaminopimelate. The protein operates within amino-acid biosynthesis; L-lysine biosynthesis via DAP pathway; DL-2,6-diaminopimelate from LL-2,6-diaminopimelate: step 1/1. In terms of biological role, catalyzes the stereoinversion of LL-2,6-diaminopimelate (L,L-DAP) to meso-diaminopimelate (meso-DAP), a precursor of L-lysine and an essential component of the bacterial peptidoglycan. The chain is Diaminopimelate epimerase from Caulobacter vibrioides (strain ATCC 19089 / CIP 103742 / CB 15) (Caulobacter crescentus).